A 147-amino-acid chain; its full sequence is E3 ubiquitin-protein ligase RHA2B (147 aa).

The RING-type; atypical zinc finger occupies 74 to 116 (CIVCLSKLKTGEEVRKLDCRHVFHKQCLEGWLQHLNFNCPLCR).

Interacts with NAC19. As to expression, expressed in vascular tissue, root tips, embryos and pistils.

The protein localises to the cytoplasm. It localises to the nucleus. The enzyme catalyses S-ubiquitinyl-[E2 ubiquitin-conjugating enzyme]-L-cysteine + [acceptor protein]-L-lysine = [E2 ubiquitin-conjugating enzyme]-L-cysteine + N(6)-ubiquitinyl-[acceptor protein]-L-lysine.. It functions in the pathway protein modification; protein ubiquitination. In terms of biological role, E3 ubiquitin-protein ligase involved in the positive regulation of abscisic acid (ABA) signaling and responses to salt and osmotic stresses during seed germination and early seedling development. Acts additively with RHA2A in regulating ABA signaling and drought response. Possesses E3 ubiquitin ligase activity in vitro. The protein is E3 ubiquitin-protein ligase RHA2B of Arabidopsis thaliana (Mouse-ear cress).